Here is a 220-residue protein sequence, read N- to C-terminus: Claudin-22 (220 aa).

Residues 1 to 10 are Cytoplasmic-facing; sequence MGLVFRTATQ. Residues 11–31 traverse the membrane as a helical segment; the sequence is AAALLLSLLGWVLSCLTNYLP. The Extracellular portion of the chain corresponds to 32–81; sequence HWKNLNLELNEMENWTMGLWKSCVIQEEVGRQCKDFDSFLALPAELQVSR. The helical transmembrane segment at 82–102 threads the bilayer; sequence VLMSLCNGLGLLGLLASGCGL. Topologically, residues 103 to 120 are cytoplasmic; it reads DCLRLGETQEGLKKRLLT. Residues 121–141 form a helical membrane-spanning segment; sequence LGGTLLWTSGVMVLVPVSWVA. Residues 142 to 164 are Extracellular-facing; sequence HKTVREFWDETMPEIVPRWEFGE. A helical transmembrane segment spans residues 165–185; that stretch reads ALFLGWFAGFCLVLGGCVLHC. The Cytoplasmic portion of the chain corresponds to 186–220; it reads AACWSPAPAASSHYAVAGPRDHQQHLELKQANPEI.

The protein belongs to the claudin family.

The protein localises to the cell junction. The protein resides in the tight junction. Its subcellular location is the cell membrane. In terms of biological role, plays a major role in tight junction-specific obliteration of the intercellular space, through calcium-independent cell-adhesion activity. The protein is Claudin-22 (Cldn22) of Mus musculus (Mouse).